The primary structure comprises 117 residues: Large ribosomal subunit protein bL20 (117 aa).

It belongs to the bacterial ribosomal protein bL20 family.

Binds directly to 23S ribosomal RNA and is necessary for the in vitro assembly process of the 50S ribosomal subunit. It is not involved in the protein synthesizing functions of that subunit. This Rickettsia peacockii (strain Rustic) protein is Large ribosomal subunit protein bL20.